Reading from the N-terminus, the 236-residue chain is Lectin alpha chain (236 aa).

Positions 8 and 10 each coordinate Mn(2+). Ca(2+)-binding residues include D10, Y12, N14, and D19. A carbohydrate is bound at residue Y12. Mn(2+) is bound by residues D19, H24, and S34. A carbohydrate is bound at residue 99 to 100 (LY). D207 lines the Ca(2+) pocket. Residue R227 participates in a carbohydrate binding.

The protein belongs to the leguminous lectin family. Equilibrium between homodimer and homotetramer. Oligomerization is pH-dependent with homotetramers forming at pH 6.5 and above. The beta and gamma chains are produced by partial proteolytic processing of the lectin alpha chain by an asparaginyl endopeptidase. Mixture of 60% alpha lectin and 40% of its beta and gamma proteolytic fragments. Seed.

Functionally, D-mannose/D-glucose-binding lectin. Has anti-inflammatory activity in rats. Induces histamine release in mast cells from rat. Induces lymphocyte proliferation and IFNG production. The chain is Lectin alpha chain from Cratylia argentea (Cratylia floribunda).